A 175-amino-acid polypeptide reads, in one-letter code: Translation initiation factor IF-3 (175 aa).

It belongs to the IF-3 family. As to quaternary structure, monomer.

The protein localises to the cytoplasm. Functionally, IF-3 binds to the 30S ribosomal subunit and shifts the equilibrium between 70S ribosomes and their 50S and 30S subunits in favor of the free subunits, thus enhancing the availability of 30S subunits on which protein synthesis initiation begins. The protein is Translation initiation factor IF-3 of Staphylococcus carnosus (strain TM300).